A 376-amino-acid polypeptide reads, in one-letter code: ATP synthase gamma chain, chloroplastic (376 aa).

The N-terminal 52 residues, 1–52, are a transit peptide targeting the chloroplast; that stretch reads MSCSNVTMLVSSKPSLPDASNLSFRSAFNPFQLPSQNSSSSCTPSRPTSIQC. Cys133 is a catalytic residue. Residues Cys250 and Cys256 are joined by a disulfide bond.

Belongs to the ATPase gamma chain family. As to quaternary structure, F-type ATPases have 2 components, CF(1) - the catalytic core - and CF(0) - the membrane proton channel. CF(1) has five subunits: alpha(3), beta(3), gamma(1), delta(1), epsilon(1). CF(0) has four main subunits: a, b, b' and c.

It is found in the plastid. The protein localises to the chloroplast thylakoid membrane. Its function is as follows. Produces ATP from ADP in the presence of a proton gradient across the membrane. The gamma chain is believed to be important in regulating ATPase activity and the flow of protons through the CF(0) complex. This chain is ATP synthase gamma chain, chloroplastic (ATPC), found in Pisum sativum (Garden pea).